The chain runs to 146 residues: Probable transporter XF_0765 (146 aa).

Transmembrane regions (helical) follow at residues 9 to 29 (FTVALAAGLLFGFGLALSEMI), 46 to 66 (NPSLLFVLGSALAVAFPGMAL), 91 to 111 (IVFGSAIFGTGWGLTGLCPGP), and 116 to 136 (LSTGLGPVLLFVAAMAAGMII).

This sequence belongs to the TsuA/YedE (TC 9.B.102) family.

The protein resides in the cell inner membrane. This Xylella fastidiosa (strain 9a5c) protein is Probable transporter XF_0765.